The sequence spans 564 residues: NAD-dependent malic enzyme (564 aa).

The Proton donor role is filled by Tyr102. Residue Arg155 coordinates NAD(+). The Proton acceptor role is filled by Lys173. A divalent metal cation contacts are provided by Glu244, Asp245, and Asp268. Residues Asp268 and Asn417 each coordinate NAD(+).

This sequence belongs to the malic enzymes family. As to quaternary structure, homotetramer. The cofactor is Mg(2+). Mn(2+) serves as cofactor.

The enzyme catalyses (S)-malate + NAD(+) = pyruvate + CO2 + NADH. It carries out the reaction oxaloacetate + H(+) = pyruvate + CO2. The chain is NAD-dependent malic enzyme from Pseudomonas aeruginosa (strain ATCC 15692 / DSM 22644 / CIP 104116 / JCM 14847 / LMG 12228 / 1C / PRS 101 / PAO1).